We begin with the raw amino-acid sequence, 318 residues long: Aspartate carbamoyltransferase catalytic subunit (318 aa).

Residues R58 and T59 each contribute to the carbamoyl phosphate site. K86 provides a ligand contact to L-aspartate. 3 residues coordinate carbamoyl phosphate: R108, H141, and Q144. Positions 174 and 226 each coordinate L-aspartate. Residues G270 and P271 each contribute to the carbamoyl phosphate site.

This sequence belongs to the aspartate/ornithine carbamoyltransferase superfamily. ATCase family. As to quaternary structure, heterododecamer (2C3:3R2) of six catalytic PyrB chains organized as two trimers (C3), and six regulatory PyrI chains organized as three dimers (R2).

It catalyses the reaction carbamoyl phosphate + L-aspartate = N-carbamoyl-L-aspartate + phosphate + H(+). Its pathway is pyrimidine metabolism; UMP biosynthesis via de novo pathway; (S)-dihydroorotate from bicarbonate: step 2/3. Its function is as follows. Catalyzes the condensation of carbamoyl phosphate and aspartate to form carbamoyl aspartate and inorganic phosphate, the committed step in the de novo pyrimidine nucleotide biosynthesis pathway. This Lactobacillus delbrueckii subsp. bulgaricus (strain ATCC BAA-365 / Lb-18) protein is Aspartate carbamoyltransferase catalytic subunit.